The sequence spans 56 residues: Large ribosomal subunit protein bL33 (56 aa).

A compositionally biased stretch (basic and acidic residues) spans 1–12 (MASKGGRDKIKL). The segment at 1 to 30 (MASKGGRDKIKLESTAGTGHFYTTTKNKRT) is disordered. Residues 15–25 (TAGTGHFYTTT) show a composition bias toward polar residues.

Belongs to the bacterial ribosomal protein bL33 family.

The sequence is that of Large ribosomal subunit protein bL33 from Ralstonia nicotianae (strain ATCC BAA-1114 / GMI1000) (Ralstonia solanacearum).